The sequence spans 181 residues: MPVNDNNLIWIDLEMTGLDPERDRIIEIATLVTDANLAILAEGPVLAIYQSDAQLALMNDWNVRTHTASGLVDRVRQSALDEEAAVAQTLAFLADWVPAGKSPICGNSIGQDRRFLFRYMPALEAYFHYRYLDVSTLKELARRWKPEILSGLKKNNTHQALDDIRESVAELAYYREHFIRL.

The region spanning 8–171 (LIWIDLEMTG…DDIRESVAEL (164 aa)) is the Exonuclease domain. Tyr-129 is a catalytic residue.

Belongs to the oligoribonuclease family.

The protein localises to the cytoplasm. Functionally, 3'-to-5' exoribonuclease specific for small oligoribonucleotides. In Sodalis glossinidius (strain morsitans), this protein is Oligoribonuclease.